The chain runs to 213 residues: Penicillin-binding protein activator LpoB (213 aa).

A signal peptide spans M1–G19. Residue C20 is the site of N-palmitoyl cysteine attachment. C20 carries S-diacylglycerol cysteine lipidation. Residues P28–H74 form a disordered region. A compositionally biased stretch (pro residues) spans P36–P50.

The protein belongs to the LpoB family. Interacts with PBP1b.

It localises to the cell outer membrane. In terms of biological role, regulator of peptidoglycan synthesis that is essential for the function of penicillin-binding protein 1B (PBP1b). This is Penicillin-binding protein activator LpoB from Escherichia coli O157:H7.